We begin with the raw amino-acid sequence, 1242 residues long: Membrane-associated phosphatidylinositol transfer protein 1 (1242 aa).

Phosphothreonine occurs at positions 59, 282, and 287. Residues Cys259–Leu330 are disordered. The segment covering Gly272–Thr282 has biased composition (polar residues). Residues Ala299–Ser319 are compositionally biased toward low complexity. Ser300, Ser304, Ser319, Ser326, Ser329, Ser342, Ser345, Ser346, and Ser373 each carry phosphoserine. At Ser382 the chain carries Phosphoserine; by CDK1. Over residues Ala581 to Ser593 the composition is skewed to low complexity. The interval Ala581 to Pro678 is disordered. A phosphoserine mark is found at Ser593, Ser600, and Ser621. Polar residues predominate over residues Gly643–Ser656. Residues Leu684–Glu878 enclose the DDHD domain. Ser894 carries the post-translational modification Phosphoserine. The interval Arg1207–Glu1242 is disordered. At Arg1209 the chain carries Omega-N-methylarginine. Phosphoserine is present on Ser1235.

Belongs to the PtdIns transfer protein family. PI transfer class IIA subfamily. As to quaternary structure, interacts with PIK4CA and VAPB. Interacts with PTK2B via its C-terminus. Interacts with RHOA. Has higher affinity for the inactive, GDP-bound form of RHOA. The CDK1-phosphorylated form interacts with PLK1. Phosphorylated on multiple sites by CDK1 at the onset of mitosis. Phosphorylation facilitates dissociation from the Golgi complex and is required for interaction with PLK1. In terms of processing, phosphorylated on threonine residues upon treatment with oleic acid. Post-translationally, phosphorylated on tyrosine residues by PTK2B.

The protein localises to the cytoplasm. Its subcellular location is the golgi apparatus. It localises to the golgi stack membrane. It is found in the endoplasmic reticulum membrane. The protein resides in the lipid droplet. The protein localises to the cleavage furrow. Its subcellular location is the midbody. The enzyme catalyses a 1,2-diacyl-sn-glycero-3-phospho-(1D-myo-inositol)(in) = a 1,2-diacyl-sn-glycero-3-phospho-(1D-myo-inositol)(out). Its function is as follows. Catalyzes the transfer of phosphatidylinositol (PI) between membranes. Binds PI, phosphatidylcholine (PC) and phosphatidic acid (PA) with the binding affinity order of PI &gt; PA &gt; PC. Regulates RHOA activity, and plays a role in cytoskeleton remodeling. Necessary for normal completion of cytokinesis. Plays a role in maintaining normal diacylglycerol levels in the Golgi apparatus. Necessary for maintaining the normal structure of the endoplasmic reticulum and the Golgi apparatus. Required for protein export from the endoplasmic reticulum and the Golgi. Binds calcium ions. The polypeptide is Membrane-associated phosphatidylinositol transfer protein 1 (Pitpnm1) (Rattus norvegicus (Rat)).